The chain runs to 80 residues: MTITNEQVERINELARKKKAEGLSEAELEEQAFLRRAYLDSVKANFRSQVETIKVIDEKTGEDVTPDKLKEIQRKNGMRD.

It belongs to the UPF0291 family.

Its subcellular location is the cytoplasm. The sequence is that of UPF0291 protein LACR_1198 from Lactococcus lactis subsp. cremoris (strain SK11).